We begin with the raw amino-acid sequence, 281 residues long: ATP synthase gamma chain (281 aa).

The protein belongs to the ATPase gamma chain family. As to quaternary structure, F-type ATPases have 2 components, CF(1) - the catalytic core - and CF(0) - the membrane proton channel. CF(1) has five subunits: alpha(3), beta(3), gamma(1), delta(1), epsilon(1). CF(0) has three main subunits: a, b and c.

It localises to the cell inner membrane. In terms of biological role, produces ATP from ADP in the presence of a proton gradient across the membrane. The gamma chain is believed to be important in regulating ATPase activity and the flow of protons through the CF(0) complex. The chain is ATP synthase gamma chain from Ehrlichia canis (strain Jake).